The sequence spans 298 residues: UDP-N-acetylenolpyruvoylglucosamine reductase (298 aa).

Residues 26–191 (KTGGEAEYLA…LSATFSLKPG (166 aa)) form the FAD-binding PCMH-type domain. R170 is an active-site residue. Catalysis depends on S220, which acts as the Proton donor. E290 is an active-site residue.

The protein belongs to the MurB family. It depends on FAD as a cofactor.

The protein resides in the cytoplasm. The catalysed reaction is UDP-N-acetyl-alpha-D-muramate + NADP(+) = UDP-N-acetyl-3-O-(1-carboxyvinyl)-alpha-D-glucosamine + NADPH + H(+). The protein operates within cell wall biogenesis; peptidoglycan biosynthesis. Cell wall formation. The protein is UDP-N-acetylenolpyruvoylglucosamine reductase of Lactobacillus acidophilus (strain ATCC 700396 / NCK56 / N2 / NCFM).